The sequence spans 750 residues: Photosystem I P700 chlorophyll a apoprotein A1 (750 aa).

Transmembrane regions (helical) follow at residues 72-95 (VFSAHFGQLAVIFIWLSGMYFHGA), 158-181 (LYTTAIGGLIAAGLMFFAGWFHYH), 197-221 (MNHHLAGLLGLGSLSWAGHQIHVSL), 293-311 (TVHHHVAIAVLFIVAGHMY), 348-371 (WHAQLGLNLALMGSLSIIVAHHMY), 387-413 (LSLFTHHMWIGGFCIVGGAAHAAIFMV), 435-457 (AIISHLNWVCIFLGFHSFGLYIH), and 532-550 (FLVHHIHAFTIHVTVLILL). Residues cysteine 574 and cysteine 583 each contribute to the [4Fe-4S] cluster site. 2 helical membrane passes run 590-611 (HVFLGLFWMYNCLSIVIFHFSW) and 664-686 (LSAYGLMFLGAHFVWAFSLMFLF). Histidine 675 is a binding site for chlorophyll a'. Chlorophyll a is bound by residues methionine 683 and tyrosine 691. Tryptophan 692 provides a ligand contact to phylloquinone. The helical transmembrane segment at 724–744 (AVGVAHYLLGGIATTWAFFLA) threads the bilayer.

This sequence belongs to the PsaA/PsaB family. In terms of assembly, the PsaA/B heterodimer binds the P700 chlorophyll special pair and subsequent electron acceptors. PSI consists of a core antenna complex that captures photons, and an electron transfer chain that converts photonic excitation into a charge separation. The eukaryotic PSI reaction center is composed of at least 11 subunits. The cofactor is P700 is a chlorophyll a/chlorophyll a' dimer, A0 is one or more chlorophyll a, A1 is one or both phylloquinones and FX is a shared 4Fe-4S iron-sulfur center..

It is found in the plastid. The protein localises to the chloroplast thylakoid membrane. The enzyme catalyses reduced [plastocyanin] + hnu + oxidized [2Fe-2S]-[ferredoxin] = oxidized [plastocyanin] + reduced [2Fe-2S]-[ferredoxin]. Its function is as follows. PsaA and PsaB bind P700, the primary electron donor of photosystem I (PSI), as well as the electron acceptors A0, A1 and FX. PSI is a plastocyanin-ferredoxin oxidoreductase, converting photonic excitation into a charge separation, which transfers an electron from the donor P700 chlorophyll pair to the spectroscopically characterized acceptors A0, A1, FX, FA and FB in turn. Oxidized P700 is reduced on the lumenal side of the thylakoid membrane by plastocyanin. The protein is Photosystem I P700 chlorophyll a apoprotein A1 of Mesostigma viride (Green alga).